An 83-amino-acid polypeptide reads, in one-letter code: U15-theraphotoxin-Cg1a (83 aa).

The signal sequence occupies residues 1-21 (MKAAILLAFAGLALLSVICHA). A propeptide spanning residues 22-49 (SENVEQDSFEEVFSAIFAMEDDLKPKER) is cleaved from the precursor. Disulfide bonds link cysteine 51–cysteine 66, cysteine 58–cysteine 71, and cysteine 65–cysteine 77. Residue alanine 81 is modified to Alanine amide.

This sequence belongs to the neurotoxin 10 (Hwtx-1) family. 66 (Jztx-24) subfamily. As to expression, expressed by the venom gland.

It is found in the secreted. In terms of biological role, probable ion channel inhibitor. The sequence is that of U15-theraphotoxin-Cg1a from Chilobrachys guangxiensis (Chinese earth tiger tarantula).